Here is a 305-residue protein sequence, read N- to C-terminus: Mycothiol acetyltransferase (305 aa).

N-acetyltransferase domains lie at 10-154 (DRLD…VVLE) and 156-305 (ISLR…YARA). Residue E38 participates in 1D-myo-inositol 2-(L-cysteinylamino)-2-deoxy-alpha-D-glucopyranoside binding. 82–84 (LAV) contributes to the acetyl-CoA binding site. Positions 183, 225, and 238 each coordinate 1D-myo-inositol 2-(L-cysteinylamino)-2-deoxy-alpha-D-glucopyranoside. Acetyl-CoA contacts are provided by residues 242–244 (VAI) and 249–255 (QGRGLGR). Y276 is a 1D-myo-inositol 2-(L-cysteinylamino)-2-deoxy-alpha-D-glucopyranoside binding site. 281–286 (NASALH) is an acetyl-CoA binding site.

This sequence belongs to the acetyltransferase family. MshD subfamily. As to quaternary structure, monomer.

It catalyses the reaction 1D-myo-inositol 2-(L-cysteinylamino)-2-deoxy-alpha-D-glucopyranoside + acetyl-CoA = mycothiol + CoA + H(+). Catalyzes the transfer of acetyl from acetyl-CoA to desacetylmycothiol (Cys-GlcN-Ins) to form mycothiol. The polypeptide is Mycothiol acetyltransferase (Rhodococcus opacus (strain B4)).